Here is an 82-residue protein sequence, read N- to C-terminus: Putative membrane protein insertion efficiency factor (82 aa).

The disordered stretch occupies residues 61–82; the sequence is HEGGYDPVPKRKNKNSEGKREE.

This sequence belongs to the UPF0161 family.

It is found in the cell inner membrane. Could be involved in insertion of integral membrane proteins into the membrane. The sequence is that of Putative membrane protein insertion efficiency factor from Fusobacterium nucleatum subsp. nucleatum (strain ATCC 25586 / DSM 15643 / BCRC 10681 / CIP 101130 / JCM 8532 / KCTC 2640 / LMG 13131 / VPI 4355).